The sequence spans 331 residues: Ribonuclease Z (331 aa).

Zn(2+)-binding residues include histidine 56, histidine 58, aspartate 60, histidine 61, histidine 162, aspartate 235, and histidine 297. The active-site Proton acceptor is the aspartate 60.

The protein belongs to the RNase Z family. In terms of assembly, homodimer. Zn(2+) serves as cofactor.

The catalysed reaction is Endonucleolytic cleavage of RNA, removing extra 3' nucleotides from tRNA precursor, generating 3' termini of tRNAs. A 3'-hydroxy group is left at the tRNA terminus and a 5'-phosphoryl group is left at the trailer molecule.. Zinc phosphodiesterase, which displays some tRNA 3'-processing endonuclease activity. Probably involved in tRNA maturation, by removing a 3'-trailer from precursor tRNA. The polypeptide is Ribonuclease Z (rnz) (Deinococcus radiodurans (strain ATCC 13939 / DSM 20539 / JCM 16871 / CCUG 27074 / LMG 4051 / NBRC 15346 / NCIMB 9279 / VKM B-1422 / R1)).